A 436-amino-acid polypeptide reads, in one-letter code: Methylenetetrahydrofolate--tRNA-(uracil-5-)-methyltransferase TrmFO (436 aa).

11 to 16 (GAGLAG) is a binding site for FAD.

Belongs to the MnmG family. TrmFO subfamily. FAD is required as a cofactor.

It localises to the cytoplasm. It carries out the reaction uridine(54) in tRNA + (6R)-5,10-methylene-5,6,7,8-tetrahydrofolate + NADH + H(+) = 5-methyluridine(54) in tRNA + (6S)-5,6,7,8-tetrahydrofolate + NAD(+). It catalyses the reaction uridine(54) in tRNA + (6R)-5,10-methylene-5,6,7,8-tetrahydrofolate + NADPH + H(+) = 5-methyluridine(54) in tRNA + (6S)-5,6,7,8-tetrahydrofolate + NADP(+). Functionally, catalyzes the folate-dependent formation of 5-methyl-uridine at position 54 (M-5-U54) in all tRNAs. The sequence is that of Methylenetetrahydrofolate--tRNA-(uracil-5-)-methyltransferase TrmFO from Shouchella clausii (strain KSM-K16) (Alkalihalobacillus clausii).